A 446-amino-acid chain; its full sequence is MNILSRIFARTPSLRTRVVVATAIGAAIPVLIVGTVVWVGITNDRKERLDRKLDEAAGFAIPFVPRGLDEIPRSPNDQDAIITVRRGNLVKSNFDITLPKLTNDYADTYLRGVRYRVRTVEIPAPEPTSIAVGATYDATVAETNNLHRRVLLICGFAIAAAAVFAWLLAAFAVRPFKQLAQQTRSVDAGGEAPRVEVHGATEAVEIAEAMRGMLQRIWNEQNRTKEALASARDFAAVSSHELRTPLTAMRTNLEVLATLDLADDQRKEVLGDVIRTQSRIEATLSALERLAQGELSTSDDHVPVDITELLDRAAHDATRSYPELKVSLVPSPTCIIVGLPAGLRLAVDNAVANAVKHGGATRVQLSAVSSRAGVEIAVDDNGSGVPEDERQVVFERFSRGSTASHSGSGLGLALVAQQAQLHGGTASLETSPLGGARLLLRISAPS.

The next 2 membrane-spanning stretches (helical) occupy residues 19 to 39 (VVATAIGAAIPVLIVGTVVWV) and 151 to 171 (LLICGFAIAAAAVFAWLLAAF). The 51-residue stretch at 172 to 222 (AVRPFKQLAQQTRSVDAGGEAPRVEVHGATEAVEIAEAMRGMLQRIWNEQN) folds into the HAMP domain. The 210-residue stretch at 237-446 (VSSHELRTPL…RLLLRISAPS (210 aa)) folds into the Histidine kinase domain. Position 240 is a phosphohistidine; by autocatalysis (His240).

In terms of processing, autophosphorylated.

It localises to the cell membrane. The enzyme catalyses ATP + protein L-histidine = ADP + protein N-phospho-L-histidine.. Member of the two-component regulatory system PrrB/PrrA that is involved specifically in early intracellular multiplication of Mycobacterium and is essential for its viability. Functions as a sensor protein kinase which is autophosphorylated at a histidine residue and transfers its phosphate group to the conserved aspartic acid residue in the regulatory domain of PrrA. In turn, PrrA binds to the upstream promoter regions of target genes including itself to positively regulate their expression. In Mycobacterium leprae (strain TN), this protein is Sensor-type histidine kinase PrrB (prrB).